We begin with the raw amino-acid sequence, 237 residues long: MPVLVLLRHGQSQWNLENRFTGWVDVDLTAEGEAQARKGGELIKAAGINLDEAFTSVQTRAIRTGNLALDAAGQSFVPVTKDWRLNERHYGGLTGLNKAETAQKHGEEQVTIWRRSYDIPPPPLAPGGEYDFGKDRRYAGKDLPDTESLKTTLTRVLPYWETAIAPKLKAGETILVAAHGNSLRAIVKHLFDVPDDKIVHVEIPTGNPLVIDLDADLKPTGARYLDAARAQPLPAVG.

Substrate contacts are provided by residues 8-15, 21-22, Arg-60, 87-90, Lys-98, 114-115, and 180-181; these read RHGQSQWN, TG, ERHY, RR, and GN. His-9 (tele-phosphohistidine intermediate) is an active-site residue. Glu-87 serves as the catalytic Proton donor/acceptor.

The protein belongs to the phosphoglycerate mutase family. BPG-dependent PGAM subfamily. As to quaternary structure, homodimer.

It carries out the reaction (2R)-2-phosphoglycerate = (2R)-3-phosphoglycerate. The protein operates within carbohydrate degradation; glycolysis; pyruvate from D-glyceraldehyde 3-phosphate: step 3/5. Catalyzes the interconversion of 2-phosphoglycerate and 3-phosphoglycerate. This is 2,3-bisphosphoglycerate-dependent phosphoglycerate mutase from Caulobacter sp. (strain K31).